Reading from the N-terminus, the 461-residue chain is Photosystem II CP43 reaction center protein (461 aa).

The propeptide occupies 1–2; sequence ME. T3 carries the N-acetylthreonine modification. T3 bears the Phosphothreonine mark. Helical transmembrane passes span 57 to 81, 122 to 143, 166 to 188, 243 to 263, and 279 to 300; these read LFEV…PHIA, LIGP…KDKN, KAMY…RIIS, KPWG…LSYS, and WFNN…ASQA. E355 provides a ligand contact to [CaMn4O5] cluster. Residues 435–459 traverse the membrane as a helical segment; the sequence is RARAAAAGFEKGIDRDTEPVLSMKP.

Belongs to the PsbB/PsbC family. PsbC subfamily. As to quaternary structure, PSII is composed of 1 copy each of membrane proteins PsbA, PsbB, PsbC, PsbD, PsbE, PsbF, PsbH, PsbI, PsbJ, PsbK, PsbL, PsbM, PsbT, PsbX, PsbY, PsbZ, Psb30/Ycf12, at least 3 peripheral proteins of the oxygen-evolving complex and a large number of cofactors. It forms dimeric complexes. Binds multiple chlorophylls and provides some of the ligands for the Ca-4Mn-5O cluster of the oxygen-evolving complex. It may also provide a ligand for a Cl- that is required for oxygen evolution. PSII binds additional chlorophylls, carotenoids and specific lipids. is required as a cofactor.

The protein resides in the plastid. It localises to the chloroplast thylakoid membrane. One of the components of the core complex of photosystem II (PSII). It binds chlorophyll and helps catalyze the primary light-induced photochemical processes of PSII. PSII is a light-driven water:plastoquinone oxidoreductase, using light energy to abstract electrons from H(2)O, generating O(2) and a proton gradient subsequently used for ATP formation. The polypeptide is Photosystem II CP43 reaction center protein (Oltmannsiellopsis viridis (Marine flagellate)).